A 179-amino-acid polypeptide reads, in one-letter code: Dynein light chain Tctex-type 5 (179 aa).

Belongs to the dynein light chain Tctex-type family. As to quaternary structure, interacts with ZMYND10.

The chain is Dynein light chain Tctex-type 5 (DYNLT5) from Homo sapiens (Human).